The following is a 165-amino-acid chain: Cystatin-like protein (165 aa).

The first 19 residues, 1 to 19 (MDVALKLLLLAALTLLASA), serve as a signal peptide directing secretion. 2 disulfides stabilise this stretch: Cys-80-Cys-92 and Cys-104-Cys-118.

Its function is as follows. Involved in hypoxia tolerance. This is Cystatin-like protein from Clarias batrachus (Walking catfish).